The primary structure comprises 371 residues: Dead end protein homolog 1 (371 aa).

2 consecutive RRM domains span residues proline 85–glycine 163 and proline 165–serine 245.

The protein localises to the nucleus. It localises to the cytoplasm. In terms of biological role, RNA-binding factor that positively regulates gene expression by prohibiting miRNA-mediated gene suppression. Relieves miRNA repression in germline cells. Prohibits the function of several miRNAs by blocking the accessibility of target mRNAs. Sequence-specific RNA-binding factor that binds to U-rich regions (URRs) in the 3'untranslated region (3'-UTR) of several mRNAs. Does not bind to miRNAs. May play a role during early embryonic survival. This chain is Dead end protein homolog 1 (dnd1), found in Xenopus laevis (African clawed frog).